The primary structure comprises 828 residues: Glycerol-3-phosphate acyltransferase 1, mitochondrial (828 aa).

The Cytoplasmic segment spans residues 1 to 87; that stretch reads MDESALTLGT…FFNPSIPSLG (87 aa). Residues 80–120 form an important for mitochondrial localization region; that stretch reads NPSIPSLGLRNVIYINETHTRHRGWLARRLSYVLFIQERDV. An intramembrane segment occupies 88-118; that stretch reads LRNVIYINETHTRHRGWLARRLSYVLFIQER. Topologically, residues 119 to 828 are cytoplasmic; the sequence is DVHKGMFATN…LEYILSFVVL (710 aa). The HXXXXD motif signature appears at 230–235; it reads HRSHID. CoA contacts are provided by Arg-278, Arg-279, Lys-288, Arg-293, and Arg-328. A Phosphoserine modification is found at Ser-380. Residues 435 to 455 are disordered; it reads SRPSDAADEGRDTSINESRNA. Over residues 442 to 455 the composition is skewed to basic and acidic residues; sequence DEGRDTSINESRNA. Residue Arg-462 participates in CoA binding. Ser-688 and Ser-695 each carry phosphoserine. An N6-acetyllysine mark is found at Lys-780 and Lys-784.

Belongs to the GPAT/DAPAT family.

Its subcellular location is the mitochondrion outer membrane. It catalyses the reaction sn-glycerol 3-phosphate + an acyl-CoA = a 1-acyl-sn-glycero-3-phosphate + CoA. The enzyme catalyses (9Z,12Z)-octadecadienoyl-CoA + sn-glycerol 3-phosphate = 1-(9Z,12Z)-octadecadienoyl-sn-glycero-3-phosphate + CoA. The catalysed reaction is sn-glycerol 3-phosphate + (9Z)-octadecenoyl-CoA = 1-(9Z-octadecenoyl)-sn-glycero-3-phosphate + CoA. It carries out the reaction sn-glycerol 3-phosphate + octadecanoyl-CoA = 1-octadecanoyl-sn-glycero-3-phosphate + CoA. It catalyses the reaction sn-glycerol 3-phosphate + hexadecanoyl-CoA = 1-hexadecanoyl-sn-glycero-3-phosphate + CoA. The enzyme catalyses dodecanoyl-CoA + sn-glycerol 3-phosphate = 1-dodecanoyl-sn-glycerol 3-phosphate + CoA. The catalysed reaction is 1-acyl-sn-glycero-3-phospho-(1'-sn-glycerol) + an acyl-CoA = a 1,2-diacyl-sn-glycero-3-phospho-(1'-sn-glycerol) + CoA. It functions in the pathway phospholipid metabolism; CDP-diacylglycerol biosynthesis; CDP-diacylglycerol from sn-glycerol 3-phosphate: step 1/3. Mitochondrial membrane protein that catalyzes the essential first step of biosynthesis of glycerolipids such as triglycerides, phosphatidic acids and lysophosphatidic acids. Esterifies acyl-group from acyl-coenzyme A (acyl-CoA) to the sn-1 position of glycerol-3-phosphate, to produce lysophosphatidic acid. Has a narrow hydrophobic binding cleft that selects for a linear acyl chain. Catalytic activity is higher for substrates with a 16-carbon acyl chain. The sequence is that of Glycerol-3-phosphate acyltransferase 1, mitochondrial from Homo sapiens (Human).